Reading from the N-terminus, the 126-residue chain is Large ribosomal subunit protein bL12 (126 aa).

The protein belongs to the bacterial ribosomal protein bL12 family. As to quaternary structure, homodimer. Part of the ribosomal stalk of the 50S ribosomal subunit. Forms a multimeric L10(L12)X complex, where L10 forms an elongated spine to which 2 to 4 L12 dimers bind in a sequential fashion. Binds GTP-bound translation factors.

Functionally, forms part of the ribosomal stalk which helps the ribosome interact with GTP-bound translation factors. Is thus essential for accurate translation. This Geotalea daltonii (strain DSM 22248 / JCM 15807 / FRC-32) (Geobacter daltonii) protein is Large ribosomal subunit protein bL12.